Here is a 334-residue protein sequence, read N- to C-terminus: Protein-methionine-sulfoxide reductase catalytic subunit MsrP (334 aa).

The tat-type signal signal peptide spans 1–44; sequence MKKNQFLKESDVTAESVFFMKRRQVLKALGISATALSLPHAAHA. Mo-molybdopterin is bound by residues Asn88, 91 to 92, Cys146, Thr181, Asn233, Arg238, and 249 to 251; these read YE and GIK.

Belongs to the MsrP family. In terms of assembly, heterodimer of a catalytic subunit (MsrP) and a heme-binding subunit (MsrQ). It depends on Mo-molybdopterin as a cofactor. Exported by the Tat system. Can also be exported by the Sec system.

The protein resides in the periplasm. It catalyses the reaction L-methionyl-[protein] + a quinone + H2O = L-methionyl-(S)-S-oxide-[protein] + a quinol. The enzyme catalyses L-methionyl-[protein] + a quinone + H2O = L-methionyl-(R)-S-oxide-[protein] + a quinol. Its function is as follows. Part of the MsrPQ system that repairs oxidized periplasmic proteins containing methionine sulfoxide residues (Met-O), using respiratory chain electrons. Thus protects these proteins from oxidative-stress damage caused by reactive species of oxygen and chlorine. MsrPQ is essential for the maintenance of envelope integrity under bleach stress, rescuing a wide series of structurally unrelated periplasmic proteins from methionine oxidation, including the primary periplasmic chaperone SurA and the lipoprotein Pal. The catalytic subunit MsrP is non-stereospecific, being able to reduce both (R-) and (S-) diastereoisomers of methionine sulfoxide. Can catalyze the reduction of a variety of substrates in vitro, including dimethyl sulfoxide, trimethylamine N-oxide, phenylmethyl sulfoxide and L-methionine sulfoxide. Cannot reduce cyclic N-oxides. Shows no activity as sulfite oxidase. This is Protein-methionine-sulfoxide reductase catalytic subunit MsrP from Escherichia coli (strain K12).